The primary structure comprises 317 residues: L-lactate dehydrogenase (317 aa).

3 residues coordinate NAD(+): Val16, Asp37, and Tyr68. Residues Gln85, Arg91, 123–126 (NPCD), and 151–154 (DSAR) contribute to the substrate site. 121–123 (ASN) provides a ligand contact to NAD(+). Catalysis depends on His178, which acts as the Proton acceptor. Phosphotyrosine is present on Tyr222. Thr231 lines the substrate pocket.

This sequence belongs to the LDH/MDH superfamily. LDH family. As to quaternary structure, homotetramer.

The protein resides in the cytoplasm. It catalyses the reaction (S)-lactate + NAD(+) = pyruvate + NADH + H(+). It functions in the pathway fermentation; pyruvate fermentation to lactate; (S)-lactate from pyruvate: step 1/1. Its function is as follows. Catalyzes the conversion of lactate to pyruvate. The sequence is that of L-lactate dehydrogenase from Mesoplasma florum (strain ATCC 33453 / NBRC 100688 / NCTC 11704 / L1) (Acholeplasma florum).